A 232-amino-acid polypeptide reads, in one-letter code: Putative N-acetylmannosamine-6-phosphate 2-epimerase (232 aa).

This sequence belongs to the NanE family.

It catalyses the reaction an N-acyl-D-glucosamine 6-phosphate = an N-acyl-D-mannosamine 6-phosphate. It functions in the pathway amino-sugar metabolism; N-acetylneuraminate degradation; D-fructose 6-phosphate from N-acetylneuraminate: step 3/5. In terms of biological role, converts N-acetylmannosamine-6-phosphate (ManNAc-6-P) to N-acetylglucosamine-6-phosphate (GlcNAc-6-P). The chain is Putative N-acetylmannosamine-6-phosphate 2-epimerase from Borrelia garinii subsp. bavariensis (strain ATCC BAA-2496 / DSM 23469 / PBi) (Borreliella bavariensis).